The sequence spans 868 residues: Transcription factor pynR (868 aa).

A DNA-binding region (zn(2)-C6 fungal-type) is located at residues 11 to 37 (CTFCRTRKIACSGERICNACRSRSIEC). Disordered regions lie at residues 51–88 (NKTT…TSAV), 662–683 (LSGS…LDLS), 715–761 (SGIP…ASDL), and 829–868 (GMGE…GMSN). Composition is skewed to low complexity over residues 663–683 (SGSR…LDLS) and 715–727 (SGIP…SISH).

It is found in the nucleus. In terms of biological role, transcription factor that regulates the expression of the gene cluster that mediates the biosynthesis of pyranonigrins, a family of antioxidative compounds. The protein is Transcription factor pynR of Aspergillus niger (strain ATCC MYA-4892 / CBS 513.88 / FGSC A1513).